Reading from the N-terminus, the 509-residue chain is Group 3 secretory phospholipase A2 (509 aa).

A signal peptide spans 1–19; sequence MGVQAGLFGMLGFLGVALG. The interval 123–149 is disordered; sequence ESPAGARKKRAAGQSGVPGGGHQREKR. Positions 150-291 are phospholipase A2-like; sequence GWTMPGTLWC…SWSSRATSPT (142 aa). Ca(2+) is bound by residues W158, G160, and G162. 4 cysteine pairs are disulfide-bonded: C159–C181, C180–C220, C187–C213, and C211–C244. The N-linked (GlcNAc...) asparagine glycan is linked to N167. Residue H184 is part of the active site. D185 is a binding site for Ca(2+). The active site involves D214. N280 carries N-linked (GlcNAc...) asparagine glycosylation. Positions 283–354 are disordered; sequence WSSRATSPTP…LQGPQGGLKP (72 aa). Over residues 284 to 296 the composition is skewed to low complexity; the sequence is SSRATSPTPSSRS. Basic residues predominate over residues 302-322; sequence PRQKQHLRKGPPHQKGSKRPS. N-linked (GlcNAc...) asparagine glycans are attached at residues N325, N396, and N439. A disordered region spans residues 458-482; sequence QQRRHQLQDKGTDERQPWPSEPLRG. Residues 463-473 show a composition bias toward basic and acidic residues; the sequence is QLQDKGTDERQ.

Belongs to the phospholipase A2 family. The cofactor is Ca(2+). Post-translationally, N-glycosylation does not affect the catalytic activity, but is required for proper secretion. A nonglycosylated form is observed in several cell types. In several cell types, the N- and C-termini are cleaved off. In terms of tissue distribution, expressed in kidney, heart, liver, and skeletal muscle. Also present in placenta and peripheral blood leukocytes. Not detected in colon, thymus, spleen and small intestine. In lung, expressed in bronchial epithelial cells and alveolar macrophages, but scarcely detected in alveolar epithelium, arterial walls and interstitial fibroblasts (at protein level). In joints of osteoarthritis and rheumatoid arthritis, expressed in endothelial cells (at protein level). In normal heart, detected in some vessels. In myocardial tissues with acute infarction, expressed in vascular endothelial cells adjacent to cardiomyocytes and those in lesions with granulation. Expression in cardiomyocytes is scarce (at protein level). In uterus, breast and colon cancers, detected in tumor cells and neighboring microvascular endothelium, but not in normal glandular tissues (at protein level). Expressed in dermal resting mast cells (at protein level) and pulmonary mast cells. Expressed in neuronal fibers (at protein level). Highly expressed in dorsal root ganglia neurons (at protein level). Expressed in Purkinje cells in cerebellum (at protein level). In stomach is preferentially expressed in neuronal fibers and in microvascular endothelium. Sparsely expressed in normal aorta (at protein level). Highly expressed in macrophages and smooth muscle cells in aorta with atheroma.

Its subcellular location is the secreted. It is found in the cell membrane. The protein localises to the cytoplasm. The protein resides in the cytoskeleton. It localises to the microtubule organizing center. Its subcellular location is the centrosome. It is found in the centriole. The protein localises to the recycling endosome. It catalyses the reaction a 1,2-diacyl-sn-glycero-3-phosphocholine + H2O = a 1-acyl-sn-glycero-3-phosphocholine + a fatty acid + H(+). The enzyme catalyses 1-hexadecanoyl-2-(9Z,12Z-octadecadienoyl)-sn-glycero-3-phosphocholine + H2O = (9Z,12Z)-octadecadienoate + 1-hexadecanoyl-sn-glycero-3-phosphocholine + H(+). It carries out the reaction 1-hexadecanoyl-2-(5Z,8Z,11Z,14Z-eicosatetraenoyl)-sn-glycero-3-phosphocholine + H2O = 1-hexadecanoyl-sn-glycero-3-phosphocholine + (5Z,8Z,11Z,14Z)-eicosatetraenoate + H(+). The catalysed reaction is 1-hexadecanoyl-2-(9Z,12Z-octadecadienoyl)-sn-glycero-3-phosphoethanolamine + H2O = 1-hexadecanoyl-sn-glycero-3-phosphoethanolamine + (9Z,12Z)-octadecadienoate + H(+). It catalyses the reaction 1-hexadecanoyl-2-(5Z,8Z,11Z,14Z-eicosatetraenoyl)-sn-glycero-3-phosphoethanolamine + H2O = 1-hexadecanoyl-sn-glycero-3-phosphoethanolamine + (5Z,8Z,11Z,14Z)-eicosatetraenoate + H(+). With respect to regulation, arachidonic acid release is markedly increased by glypican, a glycosylphosphatidylinositol-anchored heparan sulfate proteoglycan. In terms of biological role, secretory calcium-dependent phospholipase A2 that primarily targets extracellular phospholipids. Hydrolyzes the ester bond of the fatty acyl group attached at sn-2 position of phospholipids without apparent head group selectivity. Contributes to phospholipid remodeling of low-density lipoprotein (LDL) and high-density lipoprotein (HDL) particles. Hydrolyzes LDL phospholipids releasing unsaturated fatty acids that regulate macrophage differentiation toward foam cells. May act in an autocrine and paracrine manner. Secreted by immature mast cells, acts on nearby fibroblasts upstream to PTDGS to synthesize prostaglandin D2 (PGD2), which in turn promotes mast cell maturation and degranulation via PTGDR. Secreted by epididymal epithelium, acts on immature sperm cells within the duct, modulating the degree of unsaturation of the fatty acyl components of phosphatidylcholines required for acrosome assembly and sperm cell motility. Facilitates the replacement of fatty acyl chains in phosphatidylcholines in sperm membranes from omega-6 and omega-9 to omega-3 polyunsaturated fatty acids (PUFAs). Coupled to lipoxygenase pathway, may process omega-6 PUFAs to generate oxygenated lipid mediators in the male reproductive tract. At pericentrosomal preciliary compartment, negatively regulates ciliogenesis likely by regulating endocytotic recycling of ciliary membrane protein. Coupled to cyclooxygenase pathway provides arachidonate to generate prostaglandin E2 (PGE2), a potent immunomodulatory lipid in inflammation and tumorigenesis. At colonic epithelial barrier, preferentially hydrolyzes phospholipids having arachidonate and docosahexaenoate at sn-2 position, contributing to the generation of oxygenated metabolites involved in colonic stem cell homeostasis. Releases C16:0 and C18:0 lysophosphatidylcholine subclasses from neuron plasma membranes and promotes neurite outgrowth and neuron survival. The protein is Group 3 secretory phospholipase A2 of Homo sapiens (Human).